The primary structure comprises 440 residues: Argininosuccinate lyase (440 aa).

The protein belongs to the lyase 1 family. Argininosuccinate lyase subfamily.

It localises to the cytoplasm. The enzyme catalyses 2-(N(omega)-L-arginino)succinate = fumarate + L-arginine. The protein operates within amino-acid biosynthesis; L-arginine biosynthesis; L-arginine from L-ornithine and carbamoyl phosphate: step 3/3. The sequence is that of Argininosuccinate lyase from Clostridium botulinum (strain Kyoto / Type A2).